The sequence spans 232 residues: MPERVIGILGGMGPLATADLFRRIVEKTPAKRDQDHPRIIIYNNPKIPDRTAFILGNGPDPRPELITSARKLEECGADFIIMPCNTAHFFAGTIQSSVIYPLVSMIEETAKRIEEMGLRKVGLLATDGTIKGMVYHRALLKRGIHIAVPNKKDQGLVMKAIYEGVKAGNLELGRELLLKVAKKLERRSEGIIAGCTEVSVVLKPGDLTVPLIDPMDVIAERAVKLALGVEDF.

49–51 (DRT) provides a ligand contact to substrate. The Proton donor/acceptor role is filled by Cys84. Residues 85 to 87 (NTA) and Lys166 contribute to the substrate site. Cys195 serves as the catalytic Proton donor/acceptor.

It belongs to the aspartate/glutamate racemases family.

The catalysed reaction is L-aspartate = D-aspartate. The chain is Aspartate racemase from Thermococcus sp. (strain KS-8).